Consider the following 130-residue polypeptide: Small ribosomal subunit protein uS9 (130 aa).

The disordered stretch occupies residues 109 to 130 (RAKERKKYGLYGARRSPQFTKR).

It belongs to the universal ribosomal protein uS9 family.

The polypeptide is Small ribosomal subunit protein uS9 (Malacoplasma penetrans (strain HF-2) (Mycoplasma penetrans)).